The primary structure comprises 255 residues: Hydroxyacylglutathione hydrolase (255 aa).

Zn(2+) is bound by residues H56, H58, D60, H61, H114, D133, and H171.

This sequence belongs to the metallo-beta-lactamase superfamily. Glyoxalase II family. In terms of assembly, monomer. It depends on Zn(2+) as a cofactor.

It carries out the reaction an S-(2-hydroxyacyl)glutathione + H2O = a 2-hydroxy carboxylate + glutathione + H(+). It participates in secondary metabolite metabolism; methylglyoxal degradation; (R)-lactate from methylglyoxal: step 2/2. Its function is as follows. Thiolesterase that catalyzes the hydrolysis of S-D-lactoyl-glutathione to form glutathione and D-lactic acid. This is Hydroxyacylglutathione hydrolase from Chelativorans sp. (strain BNC1).